Here is a 906-residue protein sequence, read N- to C-terminus: Catenin alpha-1 (906 aa).

Thr-2 carries the N-acetylthreonine modification. An involved in homodimerization region spans residues 2–228 (TAVHAGNINF…PILYTASQAC (227 aa)). Residue Lys-57 forms a Glycyl lysine isopeptide (Lys-Gly) (interchain with G-Cter in SUMO2) linkage. Residues 97-148 (VRKQGDLMKAAAGEFADDPCSSVKRGNMVRAARALLSAVTRLLILADMADVY) are interaction with JUP and CTNNB1. A phosphoserine mark is found at Ser-264, Ser-268, Ser-295, and Ser-297. An interaction with alpha-actinin region spans residues 325-394 (TRDDRRERIV…AVMDHVSDSF (70 aa)). Thr-634 is subject to Phosphothreonine. At Ser-641 the chain carries Phosphoserine; by CK2. Thr-645 is modified (phosphothreonine). Phosphoserine; by CK1 is present on residues Ser-652 and Ser-655. Residue Thr-658 is modified to Phosphothreonine; by CK1. Lys-797 participates in a covalent cross-link: Glycyl lysine isopeptide (Lys-Gly) (interchain with G-Cter in SUMO2). Ser-851 bears the Phosphoserine mark. Residues 864 to 880 (PEKKPLVKREKQDETQT) are compositionally biased toward basic and acidic residues. The segment at 864-894 (PEKKPLVKREKQDETQTKIKRASQKKHVNPV) is disordered. Positions 881–891 (KIKRASQKKHV) are enriched in basic residues.

This sequence belongs to the vinculin/alpha-catenin family. In terms of assembly, monomer and homodimer; the monomer preferentially binds to CTNNB1 and the homodimer to actin. Component of an cadherin:catenin adhesion complex composed of at least of CDH26, beta-catenin/CTNNB1, alpha-catenin/CTNNA1 and p120 catenin/CTNND1. Possible component of an E-cadherin/ catenin adhesion complex together with E-cadherin/CDH1 and beta-catenin/CTNNB1 or gamma-catenin/JUP; the complex is located to adherens junctions. The stable association of CTNNA1 is controversial as CTNNA1 was shown not to bind to F-actin when assembled in the complex. Alternatively, the CTNNA1-containing complex may be linked to F-actin by other proteins such as LIMA1. Binds AFDN and F-actin. Interacts with ARHGAP21. Interacts with AJUBA. Interacts with LIMA1. Interacts with vinculin/VCL. Interacts with TJP2/ZO2 (via N-terminus). Interacts with TJP1/ZO1 (via N-terminus). Sumoylated. Post-translationally, phosphorylation seems to contribute to the strength of cell-cell adhesion rather than to the basic capacity for cell-cell adhesion. Ubiquitously expressed in normal tissues. As to expression, abundantly expressed in brain and cerebellum, also expressed in the placenta, liver, lung, colon, heart, pancreas, stomach and thymus.

The protein localises to the cytoplasm. The protein resides in the cytoskeleton. It localises to the cell junction. Its subcellular location is the adherens junction. It is found in the cell membrane. The protein localises to the nucleus. Its function is as follows. Associates with the cytoplasmic domain of a variety of cadherins. The association of catenins to cadherins produces a complex which is linked to the actin filament network, and which seems to be of primary importance for cadherins cell-adhesion properties. Can associate with both E- and N-cadherins. Originally believed to be a stable component of E-cadherin/catenin adhesion complexes and to mediate the linkage of cadherins to the actin cytoskeleton at adherens junctions. In contrast, cortical actin was found to be much more dynamic than E-cadherin/catenin complexes and CTNNA1 was shown not to bind to F-actin when assembled in the complex suggesting a different linkage between actin and adherens junctions components. The homodimeric form may regulate actin filament assembly and inhibit actin branching by competing with the Arp2/3 complex for binding to actin filaments. Involved in the regulation of WWTR1/TAZ, YAP1 and TGFB1-dependent SMAD2 and SMAD3 nuclear accumulation. May play a crucial role in cell differentiation. The sequence is that of Catenin alpha-1 from Homo sapiens (Human).